The sequence spans 237 residues: Eukaryotic translation initiation factor 4E-1 (237 aa).

The segment at 1–61 is disordered; the sequence is MVVEDTQKSV…KPPAALARNP (61 aa). Positions 25 to 44 are enriched in acidic residues; the sequence is NNDDDDDDLEEGEIPVDGED. Low complexity predominate over residues 47-58; sequence ATATTKPPAALA. EIF4G-binding regions lie at residues 62–65 and 72–108; these read HPLE and FDNP…NNIH. MRNA-binding positions include 80-85, Lys112, and 130-131; these read KQAAWG and WE. Cys135 and Cys173 are joined by a disulfide. The interval 156-165 is EIF4G-binding; it reads YTLLAMIGEQ. MRNA-binding positions include 180-185 and 225-229; these read RSRQDK and KKLDR.

This sequence belongs to the eukaryotic initiation factor 4E family. EIF4F is a multi-subunit complex, the composition of which varies with external and internal environmental conditions. It is composed of at least EIF4A, EIF4E and EIF4G. EIF4E is also known to interact with other partners. In higher plants two isoforms of EIF4F have been identified, named isoform EIF4F and isoform EIF(iso)4F. Isoform EIF4F has subunits p220 and p26, whereas isoform EIF(iso)4F has subunits p82 and p28. As to quaternary structure, (Microbial infection) Interacts with potyvirus viral genome-linked protein (VPg) in the nucleus; this interaction is possible in susceptible hosts but is impaired in resistant plants. Binds to soybean mosaic virus (SMV) VPg in the nucleus. Interacts with SMV nuclear inclusion protein A (NIa-Pro) and nuclear inclusion protein B (NIb) in the cytoplasm. In terms of processing, according to the redox status, the Cys-135-Cys-173 disulfide bridge may have a role in regulating protein function by affecting its ability to bind capped mRNA. Mostly expressed in roots, flowers, immature pods and mature seeds, and, to a lower extent, in stems and leaves.

It is found in the nucleus. The protein localises to the cytoplasm. Its function is as follows. Component of the protein complex eIF4F, which is involved in the recognition of the mRNA cap, ATP-dependent unwinding of 5'-terminal secondary structure and recruitment of mRNA to the ribosome. Recognizes and binds the 7-methylguanosine-containing mRNA cap during an early step in the initiation of protein synthesis and facilitates ribosome binding by inducing the unwinding of the mRNAs secondary structures. Key component of recessive resistance to potyviruses (e.g. soybean mosaic virus (SMV), bean common mosaic virus (BCMV) and watermelon mosaic virus (WMV), but not bean pod mottle virus (BPMV)). In terms of biological role, (Microbial infection) Susceptibility host factor required for viral infection by recruiting viral RNAs to the host ribosomal complex via an interaction with viral genome-linked protein (VPg). This chain is Eukaryotic translation initiation factor 4E-1, found in Glycine max (Soybean).